We begin with the raw amino-acid sequence, 214 residues long: Calcineurin B homologous protein 3 (214 aa).

The interval 1–20 (MGAAHSASEEVRELEGKTGF) is disordered. A lipid anchor (N-myristoyl glycine) is attached at glycine 2. Residues 7–16 (ASEEVRELEG) are compositionally biased toward basic and acidic residues. Residues 110–145 (SRKEKLRFLFHMYDSDSDGRITLEEYRNVVEELLSG) form the EF-hand domain. Ca(2+)-binding residues include aspartate 123, aspartate 125, aspartate 127, arginine 129, and glutamate 134.

Belongs to the calcineurin regulatory subunit family. CHP subfamily. In terms of assembly, monomer. Homodimer; disulfide-linked. Interacts with SLC9A1/NHE1; the interaction enables an optimal Na(+)/H(+) exchange activity. In terms of tissue distribution, expressed in mature megakaryocytes and polymorphonuclear granulocytes (at protein level). Abundantly expressed in heart. Also expressed at a lower level in adult testis and salivary gland, and in the placenta.

It is found in the nucleus. It localises to the cytoplasm. The protein localises to the membrane. Its subcellular location is the cell membrane. The protein resides in the cell projection. It is found in the lamellipodium. It localises to the ruffle membrane. In terms of biological role, functions as an integral cofactor in cell pH regulation by controlling plasma membrane-type Na(+)/H(+) exchange activity. Promotes the maturation, transport, cell surface stability and exchange activity of SLC9A1/NHE1 at the plasma membrane. Promotes the induction of hematopoietic stem cell differentiation toward megakaryocytic lineage. Essential for the coupling of ERK cascade activation with the expression of ETS family genes in megakaryocytic differentiation. Also involved in granulocytic differentiation in a ERK-dependent manner. Inhibits the phosphatase activity of calcineurin. The polypeptide is Calcineurin B homologous protein 3 (TESC) (Homo sapiens (Human)).